The sequence spans 258 residues: Type III pantothenate kinase (258 aa).

6–13 contacts ATP; it reads DVGNTNIV. Substrate contacts are provided by residues Tyr-100 and 107 to 110; that span reads GADR. Residue Asp-109 is the Proton acceptor of the active site. Asp-129 provides a ligand contact to K(+). Residue Thr-132 coordinates ATP. Thr-184 contacts substrate.

Belongs to the type III pantothenate kinase family. As to quaternary structure, homodimer. NH4(+) is required as a cofactor. The cofactor is K(+).

It is found in the cytoplasm. It catalyses the reaction (R)-pantothenate + ATP = (R)-4'-phosphopantothenate + ADP + H(+). It participates in cofactor biosynthesis; coenzyme A biosynthesis; CoA from (R)-pantothenate: step 1/5. In terms of biological role, catalyzes the phosphorylation of pantothenate (Pan), the first step in CoA biosynthesis. The chain is Type III pantothenate kinase from Clostridium botulinum (strain Loch Maree / Type A3).